Consider the following 217-residue polypeptide: Large ribosomal subunit protein uL1 (217 aa).

Belongs to the universal ribosomal protein uL1 family. Component of the large ribosomal subunit (LSU). Mature N.crassa ribosomes consist of a small (40S) and a large (60S) subunit. The 40S small subunit contains 1 molecule of ribosomal RNA (18S rRNA) and at least 32 different proteins. The large 60S subunit contains 3 rRNA molecules (26S, 5.8S and 5S rRNA) and at least 42 different proteins. uL1 forms part of the L1 stalk.

The protein localises to the cytoplasm. In terms of biological role, component of the ribosome, a large ribonucleoprotein complex responsible for the synthesis of proteins in the cell. The small ribosomal subunit (SSU) binds messenger RNAs (mRNAs) and translates the encoded message by selecting cognate aminoacyl-transfer RNA (tRNA) molecules. The large subunit (LSU) contains the ribosomal catalytic site termed the peptidyl transferase center (PTC), which catalyzes the formation of peptide bonds, thereby polymerizing the amino acids delivered by tRNAs into a polypeptide chain. The nascent polypeptides leave the ribosome through a tunnel in the LSU and interact with protein factors that function in enzymatic processing, targeting, and the membrane insertion of nascent chains at the exit of the ribosomal tunnel. uL1 forms part of the L1 stalk, a mobile element that plays a role in evacuating the exit-site tRNA. In Neurospora crassa (strain ATCC 24698 / 74-OR23-1A / CBS 708.71 / DSM 1257 / FGSC 987), this protein is Large ribosomal subunit protein uL1 (crp-74).